The sequence spans 761 residues: DNA topoisomerase 1 (761 aa).

A Toprim domain is found at 6 to 143 (TALIICEKPS…KRMRFSSLTK (138 aa)). Mg(2+) contacts are provided by glutamate 12 and aspartate 111. Residues 157–569 (DYGLVDAGES…EAEKRLRKIL (413 aa)) enclose the Topo IA-type catalytic domain. Positions 196–201 (SVGRVQ) are interaction with DNA. Tyrosine 315 (O-(5'-phospho-DNA)-tyrosine intermediate) is an active-site residue. 3 consecutive C4-type zinc fingers follow at residues 600 to 626 (CPKC…YPEC), 680 to 706 (CPKC…YPKC), and 721 to 747 (CPKC…YPKC).

The protein belongs to the type IA topoisomerase family. As to quaternary structure, monomer. Requires Mg(2+) as cofactor.

The enzyme catalyses ATP-independent breakage of single-stranded DNA, followed by passage and rejoining.. Functionally, releases the supercoiling and torsional tension of DNA, which is introduced during the DNA replication and transcription, by transiently cleaving and rejoining one strand of the DNA duplex. Introduces a single-strand break via transesterification at a target site in duplex DNA. The scissile phosphodiester is attacked by the catalytic tyrosine of the enzyme, resulting in the formation of a DNA-(5'-phosphotyrosyl)-enzyme intermediate and the expulsion of a 3'-OH DNA strand. The free DNA strand then undergoes passage around the unbroken strand, thus removing DNA supercoils. Finally, in the religation step, the DNA 3'-OH attacks the covalent intermediate to expel the active-site tyrosine and restore the DNA phosphodiester backbone. The chain is DNA topoisomerase 1 from Methanocaldococcus jannaschii (strain ATCC 43067 / DSM 2661 / JAL-1 / JCM 10045 / NBRC 100440) (Methanococcus jannaschii).